A 387-amino-acid polypeptide reads, in one-letter code: S-adenosylmethionine synthase (387 aa).

His16 contacts ATP. Asp18 contributes to the Mg(2+) binding site. Glu44 is a binding site for K(+). 2 residues coordinate L-methionine: Glu57 and Gln100. The flexible loop stretch occupies residues 100–110 (QSPDIAQGVDR). ATP contacts are provided by residues 167 to 169 (DAK), 232 to 233 (RF), Asp241, 247 to 248 (RK), Ala264, and Lys268. Residue Asp241 coordinates L-methionine. L-methionine is bound at residue Lys272.

It belongs to the AdoMet synthase family. Homotetramer; dimer of dimers. The cofactor is Mg(2+). Requires K(+) as cofactor.

It is found in the cytoplasm. The catalysed reaction is L-methionine + ATP + H2O = S-adenosyl-L-methionine + phosphate + diphosphate. Its pathway is amino-acid biosynthesis; S-adenosyl-L-methionine biosynthesis; S-adenosyl-L-methionine from L-methionine: step 1/1. Catalyzes the formation of S-adenosylmethionine (AdoMet) from methionine and ATP. The overall synthetic reaction is composed of two sequential steps, AdoMet formation and the subsequent tripolyphosphate hydrolysis which occurs prior to release of AdoMet from the enzyme. The chain is S-adenosylmethionine synthase from Cupriavidus metallidurans (strain ATCC 43123 / DSM 2839 / NBRC 102507 / CH34) (Ralstonia metallidurans).